Reading from the N-terminus, the 479-residue chain is CBL-interacting serine/threonine-protein kinase 10 (479 aa).

The 255-residue stretch at 12–266 (YDVGRLLGQG…IARIRESSWF (255 aa)) folds into the Protein kinase domain. Residues 18–26 (LGQGTFAKV) and lysine 41 each bind ATP. Aspartate 134 (proton acceptor) is an active-site residue. Residues 152–181 (DFGLSALADCKRQDGLLHTTCGTPAYVAPE) are activation loop. Serine 156 is modified (phosphoserine). Threonine 170 is subject to Phosphothreonine. The disordered stretch occupies residues 286 to 323 (SVEAGTAGTNENGAGPSENGAGPSENGDRVTEENHTDE). Residues 288–300 (EAGTAGTNENGAG) show a composition bias toward low complexity. Basic and acidic residues predominate over residues 311 to 323 (NGDRVTEENHTDE). Positions 322 to 346 (DEPTNLNAFDLIALSAGFDLAGLFG) constitute an NAF domain. The segment at 350 to 379 (KRESRFTSQKPASVIISKLEEVAQRLKLSI) is PPI. Positions 456 to 479 (SQQETEYQQQQQQEQQEQEEPLKF) are disordered. The span at 457-470 (QQETEYQQQQQQEQ) shows a compositional bias: low complexity.

Belongs to the protein kinase superfamily. CAMK Ser/Thr protein kinase family. SNF1 subfamily. In terms of assembly, interacts with CBL4/SOS3. Requires Mn(2+) as cofactor. Mostly expressed in roots.

It catalyses the reaction L-seryl-[protein] + ATP = O-phospho-L-seryl-[protein] + ADP + H(+). The catalysed reaction is L-threonyl-[protein] + ATP = O-phospho-L-threonyl-[protein] + ADP + H(+). CIPK serine-threonine protein kinases interact with CBL proteins. Binding of a CBL protein to the regulatory NAF domain of CIPK protein lead to the activation of the kinase in a calcium-dependent manner. In Arabidopsis thaliana (Mouse-ear cress), this protein is CBL-interacting serine/threonine-protein kinase 10 (CIPK10).